The primary structure comprises 105 residues: Pyrimidine/purine nucleoside phosphorylase (105 aa).

This sequence belongs to the nucleoside phosphorylase PpnP family.

It carries out the reaction a purine D-ribonucleoside + phosphate = a purine nucleobase + alpha-D-ribose 1-phosphate. It catalyses the reaction adenosine + phosphate = alpha-D-ribose 1-phosphate + adenine. The catalysed reaction is cytidine + phosphate = cytosine + alpha-D-ribose 1-phosphate. The enzyme catalyses guanosine + phosphate = alpha-D-ribose 1-phosphate + guanine. It carries out the reaction inosine + phosphate = alpha-D-ribose 1-phosphate + hypoxanthine. It catalyses the reaction thymidine + phosphate = 2-deoxy-alpha-D-ribose 1-phosphate + thymine. The catalysed reaction is uridine + phosphate = alpha-D-ribose 1-phosphate + uracil. The enzyme catalyses xanthosine + phosphate = alpha-D-ribose 1-phosphate + xanthine. In terms of biological role, catalyzes the phosphorolysis of diverse nucleosides, yielding D-ribose 1-phosphate and the respective free bases. Can use uridine, adenosine, guanosine, cytidine, thymidine, inosine and xanthosine as substrates. Also catalyzes the reverse reactions. This is Pyrimidine/purine nucleoside phosphorylase from Cupriavidus taiwanensis (strain DSM 17343 / BCRC 17206 / CCUG 44338 / CIP 107171 / LMG 19424 / R1) (Ralstonia taiwanensis (strain LMG 19424)).